The chain runs to 521 residues: MSHLFPPSSPVAGKPLESPQKEPGKLANTSVLTLGRKRYNYELEEYPTPDPSSSIGRQSSPVKDITSRLNETKSALSSPSKQEKVLAGPIEIELDASDPSRLAIGRKKSVCNIILPCRKNISRQHAFISYAADRNEIKLECNGTNGLSVHLPYSMQLHLVKPFPTRNFYKLVAEEPLTSQNTKQSHGKTLQKNQNFISFVLAKGETVTFPYIQGSFINFTGVTVCLSLKKVAPYPGDGNNNFDEENSTETEDELCLLTTTSDDFSWQKETPSMKFVPVEHSPRTEQISKPLLIASPALVKNSPISYRTTPQTSFVINQPSTPKKLKRKSISLKNNTIQETPLPKDKIIGTLSASTRSGGINEEESFAAVAKKTKELSSTTAIVSPAQKRLKTSLNIIPEISRSLSERGIRFDDLVHVLCNHLAFSNLQQTPLSQLQNINSNTSQLSKDELKKVLETISCIGIIVREGKDASGKPLEDEYYYDVENDDSDERKILYNSLKGRSRLRSCRKKHKQYFWKRPTK.

The tract at residues Met1–Lys63 is disordered. The segment covering Pro51 to Lys63 has biased composition (polar residues). The 55-residue stretch at Leu102–Gln156 folds into the FHA domain. Phosphoserine occurs at positions 281, 295, 302, and 384.

The protein belongs to the PLM2/TOS4 family. Post-translationally, phosphorylated by CDC28.

It localises to the nucleus. Its function is as follows. Binds to the promoters of genes with functions important for the G1/S (start) transition; primarily genes involved in DNA synthesis and repair, chromosome segregation, nuclear division and transcription. In Saccharomyces cerevisiae (strain ATCC 204508 / S288c) (Baker's yeast), this protein is Protein PLM2 (PLM2).